Reading from the N-terminus, the 724-residue chain is Probable zinc transporter MSC2 (724 aa).

The Cytoplasmic portion of the chain corresponds to 1–6 (MNLQEL). A helical transmembrane segment spans residues 7–27 (LAKVPLLLSYPTIILSSNLIV). Residues 28–58 (PSHNDLISRAASTSAAEYADEKLIFFSTDHA) are Lumenal-facing. A helical membrane pass occupies residues 59 to 79 (IRLIFLPTFVASSFNLFAHYF). Topologically, residues 80–90 (NFINYSSRRKY) are cytoplasmic. A helical membrane pass occupies residues 91–111 (YVLFTAIYFLSILTAIFHPIQ). At 112 to 134 (STCITLLIIKLLTTADESSPKIA) the chain is on the lumenal side. A helical transmembrane segment spans residues 135-155 (LNFKTILKTFVPFITLTLVIL). Over 156–174 (RWDPSFDASSGDVNKISTS) the chain is Cytoplasmic. A helical membrane pass occupies residues 175 to 195 (LAAYALLILTLRYASPLILST). Over 196 to 219 (LSSSIGVVSKDTSVAQHSISRNKR) the chain is Lumenal. Residues 220-240 (FPLILVLPIFSFVLLYLMTIV) form a helical membrane-spanning segment. The Cytoplasmic segment spans residues 241–244 (NKTY). The chain crosses the membrane as a helical span at residues 245-265 (NIQLLMVFVFFGCLSIFFLSL). The Lumenal segment spans residues 266-298 (KDLFTEDGNQKKGGQEDEYCRMFDIKYMISYLW). A helical transmembrane segment spans residues 299–319 (LTRFTILLTGIMAIVVHFLSF). Residues 320–386 (NEITSSIKTD…KQMALNKDTR (67 aa)) are Cytoplasmic-facing. A helical membrane pass occupies residues 387–407 (SIFSFLLLNTAFMFVQLLYSF). The Lumenal segment spans residues 408-417 (RSKSLGLLSD). The helical transmembrane segment at 418–438 (SLHMALDCTSLLLGLIAGVLT) threads the bilayer. At 439 to 453 (KKPASDKFPFGLNYL) the chain is on the cytoplasmic side. Residues 454–474 (GTLAGFTNGVLLLGIVCGIFV) form a helical membrane-spanning segment. Over 475 to 491 (EAIERIFNPIHLHATNE) the chain is Lumenal. The helical transmembrane segment at 492-512 (LLVVATLGLLVNLVGLFAFDH) threads the bilayer. The Cytoplasmic segment spans residues 513–528 (GAHDHGGTDNENMKGI). Residues 529–549 (FLHILADTLGSVGVVISTLLI) traverse the membrane as a helical segment. Over 550-563 (KLTHWPIFDPIASL) the chain is Lumenal. A helical membrane pass occupies residues 564-584 (LIGSLILLSALPLLKSTSANI). Over 585-724 (LLRLDDKKHN…NSLPLQPIAN (140 aa)) the chain is Cytoplasmic. Residues 614–653 (TPRFWPTESGSSGHSHAHTHSHAENHSHEHHHDQKNGSQE) are disordered. Residues 634-648 (SHAENHSHEHHHDQK) show a composition bias toward basic and acidic residues.

The protein belongs to the cation diffusion facilitator (CDF) transporter (TC 2.A.4) family. SLC30A subfamily.

It is found in the endoplasmic reticulum membrane. The protein resides in the nucleus membrane. Its function is as follows. Probably act as a zinc ion transporter moving zinc from the nucleus/endoplasmic reticulum to the cytoplasm. Involved in zinc ion homeostasis and cellular distribution. This is Probable zinc transporter MSC2 (MSC2) from Saccharomyces cerevisiae (strain ATCC 204508 / S288c) (Baker's yeast).